The chain runs to 171 residues: Protein-export protein SecB (171 aa).

It belongs to the SecB family. As to quaternary structure, homotetramer, a dimer of dimers. One homotetramer interacts with 1 SecA dimer.

It localises to the cytoplasm. In terms of biological role, one of the proteins required for the normal export of preproteins out of the cell cytoplasm. It is a molecular chaperone that binds to a subset of precursor proteins, maintaining them in a translocation-competent state. It also specifically binds to its receptor SecA. This Histophilus somni (strain 2336) (Haemophilus somnus) protein is Protein-export protein SecB.